We begin with the raw amino-acid sequence, 1327 residues long: ABC transporter 1 (1327 aa).

6 helical membrane passes run 47-67 (LGILAAIASGVPFPLMGIIFG), 100-120 (VYVGIAYFVLVYIYIASWNLF), 170-190 (KVGIVLNSVSFFITAYIIAFV), 195-215 (LGGELVSLTPAYLLMSLVGGY), 228-248 (VAGASSVAMEALSNATIVHAF), and 276-296 (VAVQSGLLYFIAFSANGLAFW). In terms of domain architecture, ABC transmembrane type-1 1 spans 47–326 (LGILAAIASG…TTYTVIFLLV (280 aa)). N-linked (GlcNAc...) asparagine glycans are attached at residues Asn381, Asn390, and Asn406. The ABC transporter 1 domain occupies 386–663 (IELNNVSFAF…DGAYAGLVRL (278 aa)). 421-428 (GLSGSGKS) contacts ATP. N-linked (GlcNAc...) asparagine glycosylation is found at Asn463 and Asn674. 6 helical membrane-spanning segments follow: residues 743–763 (FLALTSAFVVGGTYSASAVVF), 785–805 (FYGLMFFILAIIEFFANLGSW), 859–881 (LTGSVVGTIIAILVNLVVAIALS), 888–910 (IALVCLAVVPLMLGAGVMRVITM), 971–991 (LWLAISYGVSNFLYALAYWWG), and 1005–1025 (FFIVLMALLVSAQLWGQMFTL). Residues 743 to 1031 (FLALTSAFVV…MFTLAPDVSR (289 aa)) enclose the ABC transmembrane type-1 2 domain. N-linked (GlcNAc...) asparagine glycosylation occurs at Asn1050. Positions 1054 to 1081 (PCQHLKPGNDLEANAEPREKRPDQSQGG) are disordered. The 240-residue stretch at 1084–1323 (VSLNNVKFSY…SESYKINALH (240 aa)) folds into the ABC transporter 2 domain. 1119-1126 (GPSGAGKS) contacts ATP.

Belongs to the ABC transporter superfamily. ABCB family. Multidrug resistance exporter (TC 3.A.1.201) subfamily.

It is found in the membrane. In terms of biological role, ABC transporter; part of the gene cluster that mediates the biosynthesis of hydroxamate-containing siderophores that play a critical role in virulence via intracellular iron acquisition during macrophage infection. Probably involved in the excretion of the extracellular siderophores. The polypeptide is ABC transporter 1 (Ajellomyces capsulatus (Darling's disease fungus)).